Reading from the N-terminus, the 235-residue chain is Putative HAD-hydrolase YfnB (235 aa).

The Nucleophile role is filled by D10.

Belongs to the HAD-like hydrolase superfamily. YjjG family.

The protein is Putative HAD-hydrolase YfnB (yfnB) of Bacillus subtilis (strain 168).